Consider the following 137-residue polypeptide: Drosulfakinins (137 aa).

The first 31 residues, 1–31 (MGLRSCTHFATLVIPLWALAFCFLVVVPVPA), serve as a signal peptide directing secretion. Positions 32–74 (QTNLQTSKGDRRLQDLESNMGAESDQPNANLVRPSLSRFGDKR) are excised as a propeptide. Residue Phe-81 is modified to Phenylalanine amide. Residues 85–107 (VPRPMIPIELDLLMDNDDENTKA) constitute a propeptide that is removed on maturation. Tyr-113 carries the post-translational modification Sulfotyrosine. Position 118 is a phenylalanine amide (Phe-118). Sulfotyrosine is present on Tyr-130. Phe-135 bears the Phenylalanine amide mark.

Belongs to the gastrin/cholecystokinin family.

The protein resides in the secreted. In terms of biological role, drosulfakinin-0 (DSK 0) plays diverse biological roles including regulating gut muscle contraction in adults but not in larvae. This chain is Drosulfakinins, found in Drosophila yakuba (Fruit fly).